The primary structure comprises 369 residues: Iron-sulfur cluster carrier protein (369 aa).

115-122 (GKGGVGKS) contributes to the ATP binding site.

Belongs to the Mrp/NBP35 ATP-binding proteins family. Homodimer. Holo-ApbC forms a mixture of homodimers and homotetramers.

In terms of biological role, binds and transfers iron-sulfur (Fe-S) clusters to target apoproteins. Can hydrolyze ATP. Both activities are required for function in vivo, but the ability to hydrolyze ATP is not necessary for Fe-S cluster transfer. The chain is Iron-sulfur cluster carrier protein from Salmonella typhimurium (strain LT2 / SGSC1412 / ATCC 700720).